Reading from the N-terminus, the 587-residue chain is Tyrosine-protein kinase transforming protein Src (587 aa).

A disordered region spans residues 1–58; sequence MGSSKSKPKDPSQRRRSLEPPDSTHHGGFPASQTPNKTAAPDTHRTPSRSFGTVATEP. Residue glycine 2 is the site of N-myristoyl glycine; by host attachment. Over residues 7–25 the composition is skewed to basic and acidic residues; sequence KPKDPSQRRRSLEPPDSTH. Residues 81 to 142 form the SH3 domain; that stretch reads GGVTTFVALY…PSNYVAPSDS (62 aa). One can recognise an SH2 domain in the interval 148 to 245; that stretch reads WYFGKITRRE…GLCHRLTNVC (98 aa). In terms of domain architecture, Protein kinase spans 267–520; sequence LRLEVKLGQG…YLQAFLEDYF (254 aa). ATP contacts are provided by residues 273 to 281 and lysine 295; that span reads LGQGCFGEV. The Proton acceptor role is filled by aspartate 386. The residue at position 416 (tyrosine 416) is a Phosphotyrosine; by autocatalysis.

Belongs to the protein kinase superfamily. Tyr protein kinase family. SRC subfamily. In terms of processing, the phosphorylated form is termed pp60v-src.

The enzyme catalyses L-tyrosyl-[protein] + ATP = O-phospho-L-tyrosyl-[protein] + ADP + H(+). In terms of biological role, this phosphoprotein, required for both the initiation and the maintenance of neoplastic transformation, is a protein kinase that catalyzes the phosphorylation of tyrosine residues in vitro. This Galliformes protein is Tyrosine-protein kinase transforming protein Src (V-SRC).